Reading from the N-terminus, the 709-residue chain is Kelch domain-containing protein STK_09390 (709 aa).

The first 22 residues, 1–22, serve as a signal peptide directing secretion; that stretch reads MKRNTLLALVLVILIFPTLSTA. Kelch repeat units follow at residues 49 to 94, 96 to 140, 141 to 192, 193 to 240, 242 to 288, and 290 to 340; these read KIFL…VCNN, LYVV…SYDY, KIYV…FNGS, ALFV…YYNG, MYLV…VQIG, and KLII…DTNA. Fibronectin type-III domains follow at residues 315-405, 406-488, 489-566, and 568-643; these read PPPK…VPNP, PIIK…ASKA, NLTV…IYYI, and PASP…NDVR.

The protein is Kelch domain-containing protein STK_09390 of Sulfurisphaera tokodaii (strain DSM 16993 / JCM 10545 / NBRC 100140 / 7) (Sulfolobus tokodaii).